We begin with the raw amino-acid sequence, 150 residues long: Major facilitator superfamily domain-containing 14C pseudogene (150 aa).

Residues 1–25 (MSVEPPPELEEKAASEPEAGAMPEK) are disordered. The Extracellular segment spans residues 1–49 (MSVEPPPELEEKAASEPEAGAMPEKRAGAQAAGSTWLQGFGPPSVYHAA). A helical membrane pass occupies residues 50 to 70 (IVIFLEFFAWGLLTTPMLTVL). Residues 71 to 82 (HETFSQHTFLMN) are Cytoplasmic-facing. Residues 83 to 103 (GLIQGVKGLLSFLSAPLIGAL) traverse the membrane as a helical segment. The Extracellular portion of the chain corresponds to 104 to 111 (SDVWGRKP). Residues 112 to 132 (FLLGTVFFTCFPIPLMRISPC) form a helical membrane-spanning segment. Topologically, residues 133–150 (RVWWRAPVVPATCGRRMA) are cytoplasmic.

The protein belongs to the major facilitator superfamily.

It is found in the membrane. In Homo sapiens (Human), this protein is Major facilitator superfamily domain-containing 14C pseudogene.